A 480-amino-acid chain; its full sequence is Proline--tRNA ligase (480 aa).

Belongs to the class-II aminoacyl-tRNA synthetase family. ProS type 3 subfamily. In terms of assembly, homodimer.

The protein localises to the cytoplasm. It carries out the reaction tRNA(Pro) + L-proline + ATP = L-prolyl-tRNA(Pro) + AMP + diphosphate. Functionally, catalyzes the attachment of proline to tRNA(Pro) in a two-step reaction: proline is first activated by ATP to form Pro-AMP and then transferred to the acceptor end of tRNA(Pro). This Methanosarcina mazei (strain ATCC BAA-159 / DSM 3647 / Goe1 / Go1 / JCM 11833 / OCM 88) (Methanosarcina frisia) protein is Proline--tRNA ligase.